The following is a 434-amino-acid chain: Trehalose-phosphatase (434 aa).

Asp-156 and Asp-158 together coordinate Mg(2+). The active-site Proton donor/acceptor is Asp-158. 275–277 provides a ligand contact to substrate; it reads QKK. A Mg(2+)-binding site is contributed by Asp-366.

This sequence belongs to the gob-1 trehalose phosphatase family. Requires Mg(2+) as cofactor.

It carries out the reaction alpha,alpha-trehalose 6-phosphate + H2O = alpha,alpha-trehalose + phosphate. Its function is as follows. Catalyzes the hydrolysis of trehalose 6-phosphate to trehalose and phosphate; prevents the accumulation of toxic levels of trehalose 6-phosphate. The chain is Trehalose-phosphatase (gob-1) from Caenorhabditis briggsae.